Consider the following 282-residue polypeptide: MKNLIFFFKLFIHRFQQNKIAVYSGYLTYTTLLSLVPLIMVVFSVFTLLPIFEQATAQLKELVYDNFAPSAGDMVQQYLEMFVDNSKKMGIISIIGLVVVAVMLISSIDNALNEIWHNTKKRSVILSFVVYLAVLIFAPIFAGASIAISSYIFSLEMFSQDGLFSFSHHLLKFIPFVLTWLLFALVYLIVPNTQVKFRHAAVGALFAGVFFTLGKQIFIWYITTFPSYQAIYGALATIPIMIVWIHLSWQVVLLGGQFASVLKDMEMIKAGELANPLTEDRE.

6 helical membrane passes run Leu32–Phe52, Met89–Asp109, Val124–Ala144, Leu170–Val190, Val202–Ile222, and Ala234–Leu254.

Belongs to the UPF0761 family.

It localises to the cell inner membrane. This Glaesserella parasuis serovar 5 (strain SH0165) (Haemophilus parasuis) protein is UPF0761 membrane protein HAPS_1376.